A 367-amino-acid chain; its full sequence is Peptide chain release factor 2 (367 aa).

Glutamine 254 carries the N5-methylglutamine modification.

The protein belongs to the prokaryotic/mitochondrial release factor family. Methylated by PrmC. Methylation increases the termination efficiency of RF2.

It is found in the cytoplasm. Peptide chain release factor 2 directs the termination of translation in response to the peptide chain termination codons UGA and UAA. This chain is Peptide chain release factor 2, found in Leptospira interrogans serogroup Icterohaemorrhagiae serovar Lai (strain 56601).